A 164-amino-acid chain; its full sequence is IQ domain-containing protein F2 (164 aa).

2 IQ domains span residues 43 to 72 (RTKAAVKIQAWWRGTLVRRTLLHAALRAWI) and 99 to 128 (RERAVIKLQSLVRMWRVRWRYCQVLNAIYI).

This is IQ domain-containing protein F2 (IQCF2) from Homo sapiens (Human).